The primary structure comprises 770 residues: uncharacterized protein (770 aa).

The segment at 736-770 is disordered; it reads GSGQPGQSPANVGDDPNRMVQSSASQTQIGHVFNN. A compositionally biased stretch (polar residues) spans 754-770; the sequence is MVQSSASQTQIGHVFNN.

This is an uncharacterized protein from Caenorhabditis elegans.